We begin with the raw amino-acid sequence, 492 residues long: MTLWINGDWITGQGASRVKRNPVSGEVLWQGNDADAAQVEQACRAARAAFPRWARLSFAERHAVVERFAALLESNKAELTAIIARETGKPRWEAATEVTAMINKIAISIKAYHVRTGEQRSEMPDGAASLRHRPHGVLAVFGPYNFPGHLPNGHIVPALLAGNTIIFKPSELTPWSGEAVMRLWQQAGLPPGVLNLVQGGRETGQALSALEDLDGLLFTGSANTGYQLHRQLSGQPEKILALEMGGNNPLIIDEVADIDAAVHLTIQSAFVTAGQRCTCARRLLLKSGAQGDAFLARLVAVSQRLTPGNWDDEPQPFIGGLISEQAAQQVVTAWQQLEAMGGRPLLAPRLLQAGTSLLTPGIIEMTGVAGVPDEEVFGPLLRVWRYDTFDEAIRMANNTRFGLSCGLVSPEREKFDQLLLEARAGIVNWNKPLTGAASTAPFGGIGASGNHRPSAWYAADYCAWPMASLESDSLTLPATLNPGLDFSDEVVR.

220–225 (GSANTG) contributes to the NAD(+) binding site. Catalysis depends on residues Glu243 and Cys277.

This sequence belongs to the aldehyde dehydrogenase family. AstD subfamily.

It carries out the reaction N-succinyl-L-glutamate 5-semialdehyde + NAD(+) + H2O = N-succinyl-L-glutamate + NADH + 2 H(+). Its pathway is amino-acid degradation; L-arginine degradation via AST pathway; L-glutamate and succinate from L-arginine: step 4/5. In terms of biological role, catalyzes the NAD-dependent reduction of succinylglutamate semialdehyde into succinylglutamate. The protein is N-succinylglutamate 5-semialdehyde dehydrogenase of Escherichia coli (strain K12 / MC4100 / BW2952).